A 590-amino-acid polypeptide reads, in one-letter code: Aspartate--tRNA(Asp/Asn) ligase (590 aa).

E175 lines the L-aspartate pocket. Positions 199–202 (QQYK) are aspartate. Residues R221 and H450 each coordinate L-aspartate. 221-223 (RDE) is a binding site for ATP. Position 484 (E484) interacts with ATP. Residue R491 participates in L-aspartate binding. 536–539 (GVDR) contacts ATP.

It belongs to the class-II aminoacyl-tRNA synthetase family. Type 1 subfamily. In terms of assembly, homodimer.

Its subcellular location is the cytoplasm. It carries out the reaction tRNA(Asx) + L-aspartate + ATP = L-aspartyl-tRNA(Asx) + AMP + diphosphate. Aspartyl-tRNA synthetase with relaxed tRNA specificity since it is able to aspartylate not only its cognate tRNA(Asp) but also tRNA(Asn). Reaction proceeds in two steps: L-aspartate is first activated by ATP to form Asp-AMP and then transferred to the acceptor end of tRNA(Asp/Asn). This Nitrobacter winogradskyi (strain ATCC 25391 / DSM 10237 / CIP 104748 / NCIMB 11846 / Nb-255) protein is Aspartate--tRNA(Asp/Asn) ligase.